A 752-amino-acid chain; its full sequence is Peptidyl-prolyl cis-trans isomerase G (752 aa).

The PPIase cyclophilin-type domain maps to 11 to 176 (FFDIAINNQP…AEVRILSCGE (166 aa)). Residues 182–193 (KVKKEEKKRHKS) are compositionally biased toward basic residues. The segment at 182-752 (KVKKEEKKRH…SPGTDEDKSG (571 aa)) is disordered. Low complexity predominate over residues 194-214 (SSSSSSSDSDSSSDSQSSSDS). Over residues 226–251 (RKRKKKHRKNSRKHKKEKKKRKKSKK) the composition is skewed to basic residues. Residues Ser252, Ser254, Ser255, Ser257, and Ser288 each carry the phosphoserine modification. Residues 290-308 (PKADDKERKNREREREREC) show a composition bias toward basic and acidic residues. Ser313 carries the post-translational modification Phosphoserine. Residues 327–345 (FGRKIKGRGPRRYRTPSRS) are compositionally biased toward basic residues. Composition is skewed to basic and acidic residues over residues 346 to 366 (RSRD…EMQR) and 377 to 447 (RWIK…DKYN). At Ser354 the chain carries Phosphoserine. Residue Thr356 is modified to Phosphothreonine. Ser384 is modified (phosphoserine). Residue Lys390 forms a Glycyl lysine isopeptide (Lys-Gly) (interchain with G-Cter in SUMO2) linkage. Ser395, Ser411, and Ser413 each carry phosphoserine. The segment covering 448–461 (KNKVKKRGKSKSRS) has biased composition (basic residues). 2 stretches are compositionally biased toward basic and acidic residues: residues 462–552 (KSKE…DLTK) and 577–598 (RSHD…QEYR). Over residues 599 to 625 (RRGRSRSRDRRTPGRSRSKDRRRRRRD) the composition is skewed to basic residues. Residues 626-682 (SRSSEREESQSRNKEKYRSQDSKSSHRKENSEGEKRMYSKSRDHSSSNNNREKKADI) are compositionally biased toward basic and acidic residues. Phosphoserine is present on residues Ser685 and Ser688. Residues 685–705 (SPVSKTKQSSQDNEVKSSTLK) show a composition bias toward polar residues. Residue Lys691 forms a Glycyl lysine isopeptide (Lys-Gly) (interchain with G-Cter in SUMO2) linkage. Ser694, Ser742, and Ser743 each carry phosphoserine. The segment covering 706–752 (NQEDEKTRSPVEKENQKSKGQENDHVHDKNKKCDHESSPGTDEDKSG) has biased composition (basic and acidic residues). At Thr746 the chain carries Phosphothreonine. Ser751 bears the Phosphoserine mark.

Interacts with CLK1, PNN and with the phosphorylated C-terminal domain of RNA polymerase II.

It localises to the nucleus matrix. Its subcellular location is the nucleus speckle. It carries out the reaction [protein]-peptidylproline (omega=180) = [protein]-peptidylproline (omega=0). Inhibited by cyclosporin A (CsA). Functionally, PPIase that catalyzes the cis-trans isomerization of proline imidic peptide bonds in oligopeptides and may therefore assist protein folding. May be implicated in the folding, transport, and assembly of proteins. May play an important role in the regulation of pre-mRNA splicing. The chain is Peptidyl-prolyl cis-trans isomerase G (Ppig) from Rattus norvegicus (Rat).